The chain runs to 152 residues: Large ribosomal subunit protein bL9 (152 aa).

Belongs to the bacterial ribosomal protein bL9 family.

Functionally, binds to the 23S rRNA. The sequence is that of Large ribosomal subunit protein bL9 from Synechococcus sp. (strain RCC307).